We begin with the raw amino-acid sequence, 265 residues long: Synaptoporin (265 aa).

The Cytoplasmic segment spans residues 1–4 (MCMV). Residues 1–202 (MCMVIFAPLF…NIWFVFKETG (202 aa)) enclose the MARVEL domain. The chain crosses the membrane as a helical span at residues 5–25 (IFAPLFAIFAFATCGGYSGGL). Residues 26–81 (RLSVDCVNKTESNLSIDIAFAYPFRLHQVTFEVPTCEGKERQKLALIGDSSSSAEF) are Vesicular-facing. N-linked (GlcNAc...) asparagine glycosylation is found at asparagine 33 and asparagine 38. The chain crosses the membrane as a helical span at residues 82–102 (FVTVAVFAFLYSLAATVVYIF). Residues 103 to 114 (FQNKYRENNRGP) are Cytoplasmic-facing. Residues 115 to 135 (LIDFIVTVVFSFLWLVGSSAW) traverse the membrane as a helical segment. Residues 136–177 (AKGLSDVKVATDPKEVLLLMSACKQPSNKCMAIHSPVMSSLN) are Vesicular-facing. The helical transmembrane segment at 178–198 (TSVVFGFLNFILWAGNIWFVF) threads the bilayer. Topologically, residues 199–265 (KETGWHSSGQ…TGPTSFTNQI (67 aa)) are cytoplasmic. Repeat copies occupy residues 210-214 (YLSDP), 222-226 (YNQGG), 227-231 (YNQDS), 232-236 (YGSSS), and 238-242 (YSQQA). The 5 X approximate repeats stretch occupies residues 210 to 242 (YLSDPMEKHSSSYNQGGYNQDSYGSSSGYSQQA). Residue serine 212 is modified to Phosphoserine. The segment at 221-265 (SYNQGGYNQDSYGSSSGYSQQASLGPTSDEFGQQPTGPTSFTNQI) is disordered. The segment covering 224 to 243 (QGGYNQDSYGSSSGYSQQAS) has biased composition (low complexity). Positions 244–265 (LGPTSDEFGQQPTGPTSFTNQI) are enriched in polar residues.

This sequence belongs to the synaptophysin/synaptobrevin family.

It is found in the cytoplasmic vesicle. It localises to the secretory vesicle. The protein localises to the synaptic vesicle membrane. The protein resides in the synapse. Its subcellular location is the synaptosome. Its function is as follows. Intrinsic membrane protein of small synaptic vesicles. Probable vesicular channel protein. The polypeptide is Synaptoporin (SYNPR) (Homo sapiens (Human)).